The primary structure comprises 750 residues: Tegument protein UL46 homolog (750 aa).

4 disordered regions span residues Phe-437–Thr-484, Gln-525–Arg-593, Tyr-610–Tyr-669, and Ser-692–Leu-750. The span at Leu-465 to Thr-484 shows a compositional bias: polar residues. Residues Asp-528–Thr-540 are compositionally biased toward low complexity. Residues Glu-541–Pro-553 are compositionally biased toward polar residues. Basic and acidic residues-rich tracts occupy residues Val-710–Ile-727 and Lys-739–Leu-750.

This sequence belongs to the herpesviridae HHV-1 VP11/12 protein family.

Its subcellular location is the virion tegument. The protein localises to the host cell membrane. Modulates alpha trans-inducing factor-dependent activation of alpha genes. The sequence is that of Tegument protein UL46 homolog from Equine herpesvirus 1 (strain V592) (EHV-1).